Here is a 422-residue protein sequence, read N- to C-terminus: Pristinamycin IIA synthase subunit A (422 aa).

The FMN site is built by Asp59, Thr101, His151, Tyr155, Ser206, and Ser207.

This sequence belongs to the NtaA/SnaA/DszA monooxygenase family. As to quaternary structure, heterodimer of two subunits, SnaA and SnaB. The cofactor is FMN.

Functionally, catalyzes the oxidation of the proline residue of pristinamycin IIB (PIIB) to pristinamycin IIA (PIIA). The chain is Pristinamycin IIA synthase subunit A (snaA) from Streptomyces pristinaespiralis.